The chain runs to 798 residues: Integrin beta-7 (798 aa).

A signal peptide spans 1-19; that stretch reads MVALPMVLVLLLVLSRGES. Residues 20–723 are Extracellular-facing; that stretch reads ELDAKIPSTG…VRPQEKGADH (704 aa). The PSI domain maps to 44 to 92; the sequence is SCQPAPSCQKCILSHPSCAWCKQLNFTASGEAEARRCARREELLARGCP. Disulfide bonds link C51–C476, C54–C80, C64–C91, C216–C223, C271–C311, C412–C428, and C448–C474. A glycan (N-linked (GlcNAc...) asparagine) is linked at N68. The tract at residues 98–124 is disordered; that stretch reads EPRGQQEVLQDQPLSQGARGEGATQLA. Residues 150–389 enclose the VWFA domain; sequence YPVDLYYLMD…QLIMDAYNSL (240 aa). Residues S161 and S163 each coordinate Mg(2+). 4 residues coordinate Ca(2+): S163, D166, D167, and D198. Residues N254, D256, P258, and E259 each contribute to the Ca(2+) site. E259 lines the Mg(2+) pocket. An N-linked (GlcNAc...) asparagine glycan is attached at N279. D289 and E373 together coordinate Ca(2+). Residue N434 is glycosylated (N-linked (GlcNAc...) asparagine). N477 carries an N-linked (GlcNAc...) asparagine glycan. Disulfide bonds link C478–C497, C488–C500, C502–C511, C513–C545, C527–C543, C537–C548, C550–C559, C561–C582, C566–C580, C574–C585, C587–C596, C598–C621, C605–C619, C613–C624, C626–C635, C638–C641, C645–C688, C651–C670, and C654–C666. I-EGF domains follow at residues 478–512, 513–560, 561–597, and 598–636; these read CSDT…RLCE, CSVA…HLCE, CDDA…RACE, and CSGD…ALCD. The N-linked (GlcNAc...) asparagine glycan is linked to N531. N590 is a glycosylation site (N-linked (GlcNAc...) asparagine). Residues N665 and N674 are each glycosylated (N-linked (GlcNAc...) asparagine). A helical transmembrane segment spans residues 724–746; sequence TQAIVLGCVGGIVAVGLGLVLAY. Residues 747-798 lie on the Cytoplasmic side of the membrane; it reads RLSVEIYDRREYSRFEKEQQQLNWKQDSNPLYKSAITTTINPRFQEADSPTL. A Phosphotyrosine; by Tyr-kinases modification is found at Y778.

The protein belongs to the integrin beta chain family. As to quaternary structure, heterodimer of an alpha and a beta subunit. ITGB7/beta-7 associates with either ITGA4/alpha-4 or ITGAE/alpha-E. Integrin ITGA4/ITGB7 interacts with MADCAM1. Integrin ITGA4/ITGB7 interacts with VCAM1 and fibronectin. Interacts with FLNA (via filamin repeats 4, 9, 12, 17, 19, 21, and 23). In terms of assembly, (Microbial infection) May interact with HIV-1 gp120. As to expression, expressed in a variety of leukocyte lines.

It localises to the cell membrane. Its function is as follows. Integrin ITGA4/ITGB7 (alpha-4/beta-7) (Peyer patches-specific homing receptor LPAM-1) is an adhesion molecule that mediates lymphocyte migration and homing to gut-associated lymphoid tissue (GALT). Integrin ITGA4/ITGB7 interacts with the cell surface adhesion molecules MADCAM1 which is normally expressed by the vascular endothelium of the gastrointestinal tract. Also interacts with VCAM1 and fibronectin, an extracellular matrix component. It recognizes one or more domains within the alternatively spliced CS-1 region of fibronectin. Interactions involve the tripeptide L-D-T in MADCAM1, and L-D-V in fibronectin. Integrin ITGAE/ITGB7 (alpha-E/beta-7, HML-1) is a receptor for E-cadherin. Functionally, (Microbial infection) Binds to HIV-1 gp120, thereby allowing the virus to enter GALT, which is thought to be the major trigger of AIDS disease. Interaction would involve a tripeptide L-D-I in HIV-1 gp120. This chain is Integrin beta-7 (ITGB7), found in Homo sapiens (Human).